We begin with the raw amino-acid sequence, 409 residues long: Astacin-like metalloendopeptidase (409 aa).

The first 19 residues, 1–19 (MDLKMLLIFIAFLLPSVLG), serve as a signal peptide directing secretion. A compositionally biased stretch (low complexity) spans 30 to 39 (TATTESTQVT). Residues 30–54 (TATTESTQVTTEEDIYDSPSPAETD) form a disordered region. Residues 87 to 285 (SAINCRNCYW…AKINRLYNCS (199 aa)) form the Peptidase M12A domain. 5 disulfides stabilise this stretch: Cys-91-Cys-94, Cys-134-Cys-284, Cys-155-Cys-175, Cys-287-Cys-313, and Cys-339-Cys-362. Residue His-183 coordinates Zn(2+). Glu-184 is a catalytic residue. Zn(2+) is bound by residues His-187 and His-193. The CUB domain maps to 287 to 399 (CSTIIDAAFG…SGFQATFTSA (113 aa)).

Requires Zn(2+) as cofactor. Expressed in ovary and gonads.

Its subcellular location is the cytoplasm. It is found in the cell membrane. The protein resides in the cytoplasmic vesicle. The protein localises to the secretory vesicle. It localises to the cortical granule. Functionally, probable oocyte-specific oolemmal receptor involved in sperm and egg adhesion and fertilization. May act as a protease. In Gallus gallus (Chicken), this protein is Astacin-like metalloendopeptidase (ASTL).